The sequence spans 109 residues: Aquaporin-2 (109 aa).

Over 1 to 6 (SIAFSR) the chain is Cytoplasmic. The helical transmembrane segment at 7-27 (AVFAEFLATLLFVFFGLGSAL) threads the bilayer. The Extracellular portion of the chain corresponds to 28–35 (NWPSALPS). The chain crosses the membrane as a helical span at residues 36–54 (TLQIAMAFGLGIGTLVQAL). Topologically, residues 55-59 (GHVSG) are cytoplasmic. An intramembrane region (discontinuously helical) is located at residues 60-69 (AHINPAVTVA). The short motif at 63-65 (NPA) is the NPA 1 element. The Cytoplasmic segment spans residues 70 to 80 (CLVGCHVSFLR). The chain crosses the membrane as a helical span at residues 81–102 (AAFYVAAQLLGAVAGAALLHEI). The Extracellular portion of the chain corresponds to 103–109 (TPAEVRG).

Belongs to the MIP/aquaporin (TC 1.A.8) family. As to quaternary structure, homotetramer. Serine phosphorylation is necessary and sufficient for expression at the apical membrane. Endocytosis is not phosphorylation-dependent. Post-translationally, N-glycosylated.

It is found in the apical cell membrane. It localises to the basolateral cell membrane. Its subcellular location is the cell membrane. The protein localises to the cytoplasmic vesicle membrane. The protein resides in the golgi apparatus. It is found in the trans-Golgi network membrane. It carries out the reaction H2O(in) = H2O(out). The enzyme catalyses glycerol(in) = glycerol(out). In terms of biological role, forms a water-specific channel that provides the plasma membranes of renal collecting duct with high permeability to water, thereby permitting water to move in the direction of an osmotic gradient. Plays an essential role in renal water homeostasis. Could also be permeable to glycerol. The chain is Aquaporin-2 from Oryctolagus cuniculus (Rabbit).